Here is a 272-residue protein sequence, read N- to C-terminus: Petrobactin import ATP-binding protein FpuC (272 aa).

The ABC transporter domain maps to 2–238 (ISVNKVFYAH…EMFQHIFGIE (237 aa)). 34–41 (GPNGSGKS) is an ATP binding site.

It belongs to the ABC transporter superfamily. In terms of assembly, the complex is composed of two ATP-binding proteins (FpuC), two transmembrane proteins (FpuB) and a solute-binding protein (FpuA).

The protein localises to the cell membrane. It catalyses the reaction a Fe(III)-siderophore(out) + ATP + H2O = a Fe(III)-siderophore(in) + ADP + phosphate + H(+). In terms of biological role, part of an ABC transporter complex involved in ferric-petrobactin uptake. Probably responsible for energy coupling to the transport system. The chain is Petrobactin import ATP-binding protein FpuC from Bacillus anthracis.